The primary structure comprises 255 residues: Hydroxyacylglutathione hydrolase (255 aa).

Residues histidine 56, histidine 58, aspartate 60, histidine 61, histidine 114, aspartate 133, and histidine 171 each coordinate Zn(2+).

The protein belongs to the metallo-beta-lactamase superfamily. Glyoxalase II family. As to quaternary structure, monomer. Zn(2+) serves as cofactor.

The enzyme catalyses an S-(2-hydroxyacyl)glutathione + H2O = a 2-hydroxy carboxylate + glutathione + H(+). It functions in the pathway secondary metabolite metabolism; methylglyoxal degradation; (R)-lactate from methylglyoxal: step 2/2. Thiolesterase that catalyzes the hydrolysis of S-D-lactoyl-glutathione to form glutathione and D-lactic acid. This chain is Hydroxyacylglutathione hydrolase, found in Chelativorans sp. (strain BNC1).